Reading from the N-terminus, the 437-residue chain is ATP-dependent protease ATPase subunit HslU (437 aa).

ATP-binding positions include Val-18, 60–65, Asp-249, Glu-315, and Arg-387; that span reads GVGKTE.

Belongs to the ClpX chaperone family. HslU subfamily. A double ring-shaped homohexamer of HslV is capped on each side by a ring-shaped HslU homohexamer. The assembly of the HslU/HslV complex is dependent on binding of ATP.

Its subcellular location is the cytoplasm. Functionally, ATPase subunit of a proteasome-like degradation complex; this subunit has chaperone activity. The binding of ATP and its subsequent hydrolysis by HslU are essential for unfolding of protein substrates subsequently hydrolyzed by HslV. HslU recognizes the N-terminal part of its protein substrates and unfolds these before they are guided to HslV for hydrolysis. The protein is ATP-dependent protease ATPase subunit HslU of Rhodospirillum centenum (strain ATCC 51521 / SW).